A 216-amino-acid polypeptide reads, in one-letter code: CASP-like protein 2U1 (216 aa).

Residues 1-30 (MKQDTEMGEATNGYIGTPGTVPVSHAGNDS) form a disordered region. Over 1-37 (MKQDTEMGEATNGYIGTPGTVPVSHAGNDSGMRRMRT) the chain is Cytoplasmic. A helical transmembrane segment spans residues 38-58 (ASILMRLTAMALCVTALVTMV). The Extracellular segment spans residues 59–86 (TDKQTHYFNFASTTIVKTAEYTNVLALK). A helical transmembrane segment spans residues 87–107 (VFVYTNGVIAGYSLLQALWTI). The Cytoplasmic portion of the chain corresponds to 108–128 (VAKSSYSTSKARLWTTFFLDQ). A helical transmembrane segment spans residues 129-148 (FIVYVLIGVTGAATEVAYIA). Residues 149-170 (EKGESDVAWPKQCNNFGRFCSQ) are Extracellular-facing. The chain crosses the membrane as a helical span at residues 171–191 (VGASVIVCFVAILTLVFLAVL). Residues 192-216 (SAKQLFIHERPSRTTRKDGYYTSNQ) are Cytoplasmic-facing.

Belongs to the Casparian strip membrane proteins (CASP) family. Homodimer and heterodimers.

It localises to the cell membrane. In Marchantia polymorpha (Common liverwort), this protein is CASP-like protein 2U1.